The chain runs to 360 residues: A-type ATP synthase subunit C (360 aa).

The disordered stretch occupies residues 1–23 (MRLLERLWGKKPSRKSDKKKKGT). Residues 9-22 (GKKPSRKSDKKKKG) are compositionally biased toward basic residues.

Belongs to the V-ATPase V0D/AC39 subunit family. Has multiple subunits with at least A(3), B(3), C, D, E, F, H, I and proteolipid K(x).

It is found in the cell membrane. Its function is as follows. Component of the A-type ATP synthase that produces ATP from ADP in the presence of a proton gradient across the membrane. The sequence is that of A-type ATP synthase subunit C from Methanosarcina acetivorans (strain ATCC 35395 / DSM 2834 / JCM 12185 / C2A).